Consider the following 359-residue polypeptide: 3-dehydroquinate synthase (359 aa).

NAD(+) contacts are provided by residues 69–74, 103–107, 127–128, Lys140, Lys149, and 167–170; these read DGEAYK, GVIGD, TT, and CLKT. Positions 182, 245, and 262 each coordinate Zn(2+).

Belongs to the sugar phosphate cyclases superfamily. Dehydroquinate synthase family. Requires Co(2+) as cofactor. Zn(2+) is required as a cofactor. The cofactor is NAD(+).

Its subcellular location is the cytoplasm. The enzyme catalyses 7-phospho-2-dehydro-3-deoxy-D-arabino-heptonate = 3-dehydroquinate + phosphate. It participates in metabolic intermediate biosynthesis; chorismate biosynthesis; chorismate from D-erythrose 4-phosphate and phosphoenolpyruvate: step 2/7. In terms of biological role, catalyzes the conversion of 3-deoxy-D-arabino-heptulosonate 7-phosphate (DAHP) to dehydroquinate (DHQ). The sequence is that of 3-dehydroquinate synthase from Aeromonas salmonicida (strain A449).